Consider the following 548-residue polypeptide: Eukaryotic translation initiation factor 3 subunit D (548 aa).

Position 53 is an N6-acetyllysine (Lys-53). A Phosphoserine modification is found at Ser-161. The RNA gate stretch occupies residues 285 to 299 (DFDLLTVSETANEPP). Positions 523–548 (PDGTFSSDEDDEEEEEEEEEEEEEEA) are disordered. Phosphoserine occurs at positions 528 and 529. The segment covering 529–548 (SDEDDEEEEEEEEEEEEEEA) has biased composition (acidic residues).

It belongs to the eIF-3 subunit D family. In terms of assembly, component of the eukaryotic translation initiation factor 3 (eIF-3) complex, which is composed of 13 subunits: EIF3A, EIF3B, EIF3C, EIF3D, EIF3E, EIF3F, EIF3G, EIF3H, EIF3I, EIF3J, EIF3K, EIF3L and EIF3M. The eIF-3 complex appears to include 3 stable modules: module A is composed of EIF3A, EIF3B, EIF3G and EIF3I; module B is composed of EIF3F, EIF3H, and EIF3M; and module C is composed of EIF3C, EIF3D, EIF3E, EIF3K and EIF3L. EIF3C of module C binds EIF3B of module A and EIF3H of module B, thereby linking the three modules. EIF3J is a labile subunit that binds to the eIF-3 complex via EIF3B. The eIF-3 complex interacts with RPS6KB1 under conditions of nutrient depletion. Mitogenic stimulation leads to binding and activation of a complex composed of MTOR and RPTOR, leading to phosphorylation and release of RPS6KB1 and binding of EIF4B to eIF-3.

The protein resides in the cytoplasm. In terms of biological role, mRNA cap-binding component of the eukaryotic translation initiation factor 3 (eIF-3) complex, a complex required for several steps in the initiation of protein synthesis of a specialized repertoire of mRNAs. The eIF-3 complex associates with the 40S ribosome and facilitates the recruitment of eIF-1, eIF-1A, eIF-2:GTP:methionyl-tRNAi and eIF-5 to form the 43S pre-initiation complex (43S PIC). The eIF-3 complex stimulates mRNA recruitment to the 43S PIC and scanning of the mRNA for AUG recognition. The eIF-3 complex is also required for disassembly and recycling of post-termination ribosomal complexes and subsequently prevents premature joining of the 40S and 60S ribosomal subunits prior to initiation. The eIF-3 complex specifically targets and initiates translation of a subset of mRNAs involved in cell proliferation, including cell cycling, differentiation and apoptosis, and uses different modes of RNA stem-loop binding to exert either translational activation or repression. In the eIF-3 complex, EIF3D specifically recognizes and binds the 7-methylguanosine cap of a subset of mRNAs. In Bos taurus (Bovine), this protein is Eukaryotic translation initiation factor 3 subunit D.